Consider the following 162-residue polypeptide: Probable chemoreceptor glutamine deamidase CheD (162 aa).

Belongs to the CheD family.

It catalyses the reaction L-glutaminyl-[protein] + H2O = L-glutamyl-[protein] + NH4(+). Probably deamidates glutamine residues to glutamate on methyl-accepting chemotaxis receptors (MCPs), playing an important role in chemotaxis. This is Probable chemoreceptor glutamine deamidase CheD from Caldanaerobacter subterraneus subsp. tengcongensis (strain DSM 15242 / JCM 11007 / NBRC 100824 / MB4) (Thermoanaerobacter tengcongensis).